The primary structure comprises 395 residues: Nitrite extrusion protein (395 aa).

12 helical membrane-spanning segments follow: residues 15–35 (SLVA…QITL), 44–64 (ISLV…PLGY), 73–93 (LMFM…SIAD), 96–116 (FDLI…SIGV), 133–153 (GIYG…PVIA), 160–180 (STVQ…VLFG), 203–223 (VLWF…AFTI), 240–262 (AGLR…GFLA), 271–291 (LMFV…SPTI), 293–313 (LYTF…GTVF), 330–350 (IVSA…ASVF), and 357–377 (AIGF…VIWM).

This sequence belongs to the major facilitator superfamily. Nitrate/nitrite porter (TC 2.A.1.8) family.

The protein localises to the cell membrane. Involved in excretion of nitrite produced by the dissimilatory reduction of nitrate. The sequence is that of Nitrite extrusion protein (narK) from Bacillus subtilis (strain 168).